Reading from the N-terminus, the 511-residue chain is NAD(P)H-quinone oxidoreductase subunit 2 B, chloroplastic (511 aa).

13 helical membrane-spanning segments follow: residues Leu-24–Leu-44, Ile-57–Phe-77, Ile-99–Ile-119, Met-124–Cys-144, Leu-149–Tyr-169, Tyr-183–Gly-203, Pro-227–Ala-247, Trp-295–Ile-315, Met-323–Asp-343, Tyr-354–Leu-374, Ala-395–Phe-415, Leu-418–Leu-438, and Met-484–Ile-504.

The protein belongs to the complex I subunit 2 family. NDH is composed of at least 16 different subunits, 5 of which are encoded in the nucleus.

Its subcellular location is the plastid. It localises to the chloroplast thylakoid membrane. The enzyme catalyses a plastoquinone + NADH + (n+1) H(+)(in) = a plastoquinol + NAD(+) + n H(+)(out). It catalyses the reaction a plastoquinone + NADPH + (n+1) H(+)(in) = a plastoquinol + NADP(+) + n H(+)(out). In terms of biological role, NDH shuttles electrons from NAD(P)H:plastoquinone, via FMN and iron-sulfur (Fe-S) centers, to quinones in the photosynthetic chain and possibly in a chloroplast respiratory chain. The immediate electron acceptor for the enzyme in this species is believed to be plastoquinone. Couples the redox reaction to proton translocation, and thus conserves the redox energy in a proton gradient. The sequence is that of NAD(P)H-quinone oxidoreductase subunit 2 B, chloroplastic from Nandina domestica (Heavenly bamboo).